The primary structure comprises 317 residues: MRSYKLIAPAKINLYLEIIGDRPDGYHELVMILQSIDLADEIEIHSLSSETIHVHCNHPQVPTDKSNLVYRAAELMVTRFPEAFTKHGGVDITVHKHIPVAAGLAGGSTNAAAVLVGIDLLWNLGLTQTELEELGSTLGSDVPFCVAGGTVIATGRGEQLSPLPSLDHIYIVLGKYRSLEVSTAWAYKNYRQEYGSTYLRDTNDLASRAAAVHSGSIVKAIVEKDAVAIAQRLHNDLEKVVLPSYPQVLHLRELLASQPGVIGTMMSGSGPSVFALCETQAQAEQVQQQVRQTIPDEDLELFVTRTITHGIQVVGNG.

Lysine 11 is a catalytic residue. Residue 99–109 (PVAAGLAGGST) coordinates ATP. Residue aspartate 141 is part of the active site.

This sequence belongs to the GHMP kinase family. IspE subfamily.

The enzyme catalyses 4-CDP-2-C-methyl-D-erythritol + ATP = 4-CDP-2-C-methyl-D-erythritol 2-phosphate + ADP + H(+). It functions in the pathway isoprenoid biosynthesis; isopentenyl diphosphate biosynthesis via DXP pathway; isopentenyl diphosphate from 1-deoxy-D-xylulose 5-phosphate: step 3/6. Functionally, catalyzes the phosphorylation of the position 2 hydroxy group of 4-diphosphocytidyl-2C-methyl-D-erythritol. The protein is 4-diphosphocytidyl-2-C-methyl-D-erythritol kinase of Nostoc sp. (strain PCC 7120 / SAG 25.82 / UTEX 2576).